A 120-amino-acid polypeptide reads, in one-letter code: Kidney androgen-regulated protein (120 aa).

The first 18 residues, 1-18, serve as a signal peptide directing secretion; sequence MMICKVLVITVFCVLTVA.

Its subcellular location is the secreted. The sequence is that of Kidney androgen-regulated protein (Kap) from Rattus norvegicus (Rat).